Here is an 849-residue protein sequence, read N- to C-terminus: Membrane protein-large ribosomal subunit bL9 fusion protein (849 aa).

The segment at 1 to 680 (MFSKNKHNTK…TQLEGTNIKT (680 aa)) is unknown. 2 helical membrane-spanning segments follow: residues 11–31 (FIVI…LDFQ) and 64–84 (IIFF…VISF). In terms of domain architecture, GGDEF spans 214–342 (KTLALAMITF…GGDQVVVNIE (129 aa)). Positions 681–849 (VTDTLKHFLK…FLNVTERKSK (169 aa)) are large ribosomal subunit protein bL9.

Belongs to the bacterial ribosomal protein bL9 family.

The protein localises to the cell membrane. Its function is as follows. Binds to the 23S rRNA. The chain is Membrane protein-large ribosomal subunit bL9 fusion protein from Onion yellows phytoplasma (strain OY-M).